The sequence spans 173 residues: Alpha-crystallin A chain (173 aa).

M1 is subject to N-acetylmethionine. The interval 1–63 (MDVTIQHPWF…RTVLDSGVSE (63 aa)) is required for complex formation with BFSP1 and BFSP2. A Deamidated glutamine; partial modification is found at Q6. A Phosphoserine modification is found at S45. A Deamidated glutamine; partial modification is found at Q50. Positions 52–162 (LFRTVLDSGV…GHSERAIPVS (111 aa)) constitute a sHSP domain. K70 carries the N6-acetyllysine modification. Residue Q90 is modified to Deamidated glutamine; partial. At K99 the chain carries N6-acetyllysine. H100 provides a ligand contact to Zn(2+). Deamidated asparagine; partial is present on N101. E102 and H107 together coordinate Zn(2+). The residue at position 122 (S122) is a Phosphoserine. N123 is modified (deamidated asparagine; partial). Residues 145-173 (KVQSGLDAGHSERAIPVSREEKPSSAPSS) form a disordered region. Q147 bears the Deamidated glutamine; partial mark. The segment covering 153-167 (GHSERAIPVSREEKP) has biased composition (basic and acidic residues). H154 is a Zn(2+) binding site. Residue S162 is glycosylated (O-linked (GlcNAc) serine).

It belongs to the small heat shock protein (HSP20) family. In terms of assembly, heteromer composed of three CRYAA and one CRYAB subunits. Inter-subunit bridging via zinc ions enhances stability, which is crucial as there is no protein turn over in the lens. Can also form homodimers and homotetramers (dimers of dimers) which serve as the building blocks of homooligomers. Within homooligomers, the zinc-binding motif is created from residues of 3 different molecules. His-100 and Glu-102 from one molecule are ligands of the zinc ion, and His-107 and His-154 residues from additional molecules complete the site with tetrahedral coordination geometry. Part of a complex required for lens intermediate filament formation composed of BFSP1, BFSP2 and CRYAA. In terms of processing, acetylation at Lys-70 may increase chaperone activity. Post-translationally, undergoes age-dependent proteolytical cleavage at the C-terminus.

Its subcellular location is the cytoplasm. It is found in the nucleus. Functionally, contributes to the transparency and refractive index of the lens. Acts as a chaperone, preventing aggregation of various proteins under a wide range of stress conditions. Required for the correct formation of lens intermediate filaments as part of a complex composed of BFSP1, BFSP2 and CRYAA. The sequence is that of Alpha-crystallin A chain (CRYAA) from Eulemur fulvus fulvus (Brown lemur).